We begin with the raw amino-acid sequence, 439 residues long: GTPase Der (439 aa).

EngA-type G domains follow at residues 3–167 and 176–351; these read PLVA…PKSS and TRIA…AQYS. Residues 9 to 16, 56 to 60, 119 to 122, 182 to 189, 229 to 233, and 294 to 297 contribute to the GTP site; these read GRPNVGKS, DTGGF, NKVD, DTAGI, and NKWD. The region spanning 352–436 is the KH-like domain; the sequence is KRVSTSDLNR…PLKIIFRGRD (85 aa).

The protein belongs to the TRAFAC class TrmE-Era-EngA-EngB-Septin-like GTPase superfamily. EngA (Der) GTPase family. Associates with the 50S ribosomal subunit.

Its function is as follows. GTPase that plays an essential role in the late steps of ribosome biogenesis. The sequence is that of GTPase Der from Geobacter metallireducens (strain ATCC 53774 / DSM 7210 / GS-15).